The chain runs to 339 residues: 4-hydroxy-2-oxovalerate aldolase 3 (339 aa).

Residues 7–259 (IRVTDTSLRD…KTGIDFFAIA (253 aa)) form the Pyruvate carboxyltransferase domain. 15–16 (RD) contacts substrate. Residue D16 coordinates Mn(2+). H19 (proton acceptor) is an active-site residue. The substrate site is built by S169 and H198. Mn(2+)-binding residues include H198 and H200. Y289 is a substrate binding site.

This sequence belongs to the 4-hydroxy-2-oxovalerate aldolase family.

It catalyses the reaction (S)-4-hydroxy-2-oxopentanoate = acetaldehyde + pyruvate. This is 4-hydroxy-2-oxovalerate aldolase 3 (hsaF) from Rhodococcus jostii (strain RHA1).